A 216-amino-acid polypeptide reads, in one-letter code: Ribonuclease HII (216 aa).

Positions 33 to 216 (WPVAGADEAG…RMSFRPFRQV (184 aa)) constitute an RNase H type-2 domain. Residues aspartate 39, glutamate 40, and aspartate 130 each coordinate a divalent metal cation.

This sequence belongs to the RNase HII family. Requires Mn(2+) as cofactor. Mg(2+) is required as a cofactor.

The protein resides in the cytoplasm. The enzyme catalyses Endonucleolytic cleavage to 5'-phosphomonoester.. Its function is as follows. Endonuclease that specifically degrades the RNA of RNA-DNA hybrids. The chain is Ribonuclease HII from Rhizobium meliloti (strain 1021) (Ensifer meliloti).